We begin with the raw amino-acid sequence, 588 residues long: Protein gamma response 1 (588 aa).

Coiled-coil stretches lie at residues 64–104 (AACD…LGKT) and 164–281 (SEVK…KTVV). 3 stretches are compositionally biased toward basic and acidic residues: residues 377-389 (KHSE…DKVR), 465-484 (NVKR…KKDD), and 508-525 (TSKK…KAER). Disordered regions lie at residues 377-398 (KHSE…SGNN) and 417-525 (PIVR…KAER).

In terms of tissue distribution, basal levels in mitotically dividing cells (meristems), and high levels in endoreduplicating cells (stipules, trichomes) (at protein level).

It is found in the nucleus. In terms of biological role, seems to mediate cell cycle arrest before mitosis in response to DNA damage. Is probably also involved in the transition from mitosis to endoreduplication. The sequence is that of Protein gamma response 1 (GR1) from Arabidopsis thaliana (Mouse-ear cress).